A 315-amino-acid chain; its full sequence is DNA-directed RNA polymerase subunit alpha (315 aa).

Residues 1–228 (MAQFQIECVE…DLFNPLKDIS (228 aa)) form an alpha N-terminal domain (alpha-NTD) region. The alpha C-terminal domain (alpha-CTD) stretch occupies residues 238-315 (IPDDPTAQIP…LPQERSSKHS (78 aa)).

Belongs to the RNA polymerase alpha chain family. In cyanobacteria the RNAP catalytic core is composed of 2 alpha, 1 beta, 1 beta', 1 gamma and 1 omega subunit. When a sigma factor is associated with the core the holoenzyme is formed, which can initiate transcription.

It catalyses the reaction RNA(n) + a ribonucleoside 5'-triphosphate = RNA(n+1) + diphosphate. Functionally, DNA-dependent RNA polymerase catalyzes the transcription of DNA into RNA using the four ribonucleoside triphosphates as substrates. The chain is DNA-directed RNA polymerase subunit alpha from Trichormus variabilis (strain ATCC 29413 / PCC 7937) (Anabaena variabilis).